A 325-amino-acid chain; its full sequence is ATP phosphoribosyltransferase (325 aa).

It belongs to the ATP phosphoribosyltransferase family. Long subfamily. It depends on Mg(2+) as a cofactor.

The protein localises to the cytoplasm. The enzyme catalyses 1-(5-phospho-beta-D-ribosyl)-ATP + diphosphate = 5-phospho-alpha-D-ribose 1-diphosphate + ATP. Its pathway is amino-acid biosynthesis; L-histidine biosynthesis; L-histidine from 5-phospho-alpha-D-ribose 1-diphosphate: step 1/9. With respect to regulation, feedback inhibited by histidine. Its function is as follows. Catalyzes the condensation of ATP and 5-phosphoribose 1-diphosphate to form N'-(5'-phosphoribosyl)-ATP (PR-ATP). Has a crucial role in the pathway because the rate of histidine biosynthesis seems to be controlled primarily by regulation of HisG enzymatic activity. The sequence is that of ATP phosphoribosyltransferase from Nitrobacter winogradskyi (strain ATCC 25391 / DSM 10237 / CIP 104748 / NCIMB 11846 / Nb-255).